Reading from the N-terminus, the 386-residue chain is Pepsin A (386 aa).

Residues 1–15 form the signal peptide; sequence MKWLLLLSLVALSEC. Positions 16–60 are cleaved as a propeptide — activation peptide; the sequence is YIYKVPLVKKKSLRKNLMEQGLLQDYLKTHSINPASKYLKEAASM. One can recognise a Peptidase A1 domain in the interval 74 to 383; sequence YFGTIGIGTP…DRGNNQVGLA (310 aa). Asp-92 is a catalytic residue. 2 disulfides stabilise this stretch: Cys-105/Cys-110 and Cys-266/Cys-270. The active site involves Asp-275. A disulfide bridge connects residues Cys-309 and Cys-342.

It belongs to the peptidase A1 family.

It is found in the secreted. The enzyme catalyses Preferential cleavage: hydrophobic, preferably aromatic, residues in P1 and P1' positions. Cleaves 1-Phe-|-Val-2, 4-Gln-|-His-5, 13-Glu-|-Ala-14, 14-Ala-|-Leu-15, 15-Leu-|-Tyr-16, 16-Tyr-|-Leu-17, 23-Gly-|-Phe-24, 24-Phe-|-Phe-25 and 25-Phe-|-Tyr-26 bonds in the B chain of insulin.. Its function is as follows. Shows particularly broad specificity; although bonds involving phenylalanine and leucine are preferred, many others are also cleaved to some extent. In Rhinolophus ferrumequinum (Greater horseshoe bat), this protein is Pepsin A (PGA).